The chain runs to 346 residues: Methylthioribose-1-phosphate isomerase (346 aa).

Residues 46–48, Arg89, and Gln196 each bind substrate; that span reads RGA. Residue Asp237 is the Proton donor of the active site. 247–248 contacts substrate; the sequence is NK.

It belongs to the eIF-2B alpha/beta/delta subunits family. MtnA subfamily.

The enzyme catalyses 5-(methylsulfanyl)-alpha-D-ribose 1-phosphate = 5-(methylsulfanyl)-D-ribulose 1-phosphate. Its pathway is amino-acid biosynthesis; L-methionine biosynthesis via salvage pathway; L-methionine from S-methyl-5-thio-alpha-D-ribose 1-phosphate: step 1/6. Its function is as follows. Catalyzes the interconversion of methylthioribose-1-phosphate (MTR-1-P) into methylthioribulose-1-phosphate (MTRu-1-P). This chain is Methylthioribose-1-phosphate isomerase, found in Geobacter metallireducens (strain ATCC 53774 / DSM 7210 / GS-15).